Reading from the N-terminus, the 547-residue chain is Probable acetolactate synthase (547 aa).

Position 57 (E57) interacts with thiamine diphosphate. FAD contacts are provided by residues P159 and 299–318 (DRVE…LYGD). Residues 388 to 468 (DFGSYAGRMI…VVSVIGNNGI (81 aa)) are thiamine pyrophosphate binding. Mg(2+) is bound by residues D439 and N466.

This sequence belongs to the TPP enzyme family. It depends on Mg(2+) as a cofactor. The cofactor is thiamine diphosphate.

The enzyme catalyses 2 pyruvate + H(+) = (2S)-2-acetolactate + CO2. Its pathway is amino-acid biosynthesis; L-isoleucine biosynthesis; L-isoleucine from 2-oxobutanoate: step 1/4. The protein operates within amino-acid biosynthesis; L-valine biosynthesis; L-valine from pyruvate: step 1/4. The chain is Probable acetolactate synthase (ilvG) from Mycobacterium bovis (strain ATCC BAA-935 / AF2122/97).